Consider the following 629-residue polypeptide: MMETIKSEIKRTIEGIVREMAPDWSEDIQFVDTPSPELGDFGTPVAFQLARLLRKSPLIIAQEIAEKFNKNKPKEVKKAIAVNGYVNFFLDYPQISKLVIEAILGYGTEYGRSEIGKGKKVIVEHTSVNPTKPLHMGHARNAILGDTVARILRFLGYQVEVQNYIDDLGVQFAQVYWGYLNLKRKFDELMKELKEKIPKNNPIDHVLGLLYVEVNKKIEESSEVEKEIRELMKKLEERELNGRKLAEEVVKAQMETLYSLNIYYDLLVWESDIVSTRLFEKTIKLLEKNENFYTPKEGKYKGAFVMDLSKLFPDMKNPYLVLRRSDGTATYTGKDIAYHLWKFGKIDIDLMYKKWDEHTWTTAPDGEPIPGKFGAGDIVINVIGAEQRHPQLAIKYALELLGYKDAAENFHHLAYEHVESPEGKFSGRKGTWVGFTVDEVIAEAINKAKSLIEEKNPNLTEEEKEEIAKKVAVGAIRYTLIKYSPEKKIVFRWEDVLNFEGESAPYIQYAHARCSSILRKAEELGISTDWKSLLKVANFNQITEKERELIMLLSRFPEIVQQAGTDLKPHLIAWYANEVASTFNKFYMDHPVIKAEEGVREARLLLVMATRQVLRNSLWLMGIEAPDKM.

Residues 128–138 carry the 'HIGH' region motif; the sequence is VNPTKPLHMGH.

It belongs to the class-I aminoacyl-tRNA synthetase family.

The protein resides in the cytoplasm. The catalysed reaction is tRNA(Arg) + L-arginine + ATP = L-arginyl-tRNA(Arg) + AMP + diphosphate. The sequence is that of Arginine--tRNA ligase from Pyrococcus furiosus (strain ATCC 43587 / DSM 3638 / JCM 8422 / Vc1).